The sequence spans 356 residues: UDP-N-acetylglucosamine--N-acetylmuramyl-(pentapeptide) pyrophosphoryl-undecaprenol N-acetylglucosamine transferase (356 aa).

Residues 12-14, Asn-120, Arg-163, Ser-187, and Gln-286 contribute to the UDP-N-acetyl-alpha-D-glucosamine site; that span reads SGG.

The protein belongs to the glycosyltransferase 28 family. MurG subfamily.

The protein localises to the cell inner membrane. It carries out the reaction di-trans,octa-cis-undecaprenyl diphospho-N-acetyl-alpha-D-muramoyl-L-alanyl-D-glutamyl-meso-2,6-diaminopimeloyl-D-alanyl-D-alanine + UDP-N-acetyl-alpha-D-glucosamine = di-trans,octa-cis-undecaprenyl diphospho-[N-acetyl-alpha-D-glucosaminyl-(1-&gt;4)]-N-acetyl-alpha-D-muramoyl-L-alanyl-D-glutamyl-meso-2,6-diaminopimeloyl-D-alanyl-D-alanine + UDP + H(+). It functions in the pathway cell wall biogenesis; peptidoglycan biosynthesis. In terms of biological role, cell wall formation. Catalyzes the transfer of a GlcNAc subunit on undecaprenyl-pyrophosphoryl-MurNAc-pentapeptide (lipid intermediate I) to form undecaprenyl-pyrophosphoryl-MurNAc-(pentapeptide)GlcNAc (lipid intermediate II). This is UDP-N-acetylglucosamine--N-acetylmuramyl-(pentapeptide) pyrophosphoryl-undecaprenol N-acetylglucosamine transferase from Pelagibacter ubique (strain HTCC1062).